The primary structure comprises 344 residues: Uroporphyrinogen decarboxylase (344 aa).

Residues 23 to 27 (RQAGR), Asp73, Tyr149, Thr204, and His321 each bind substrate.

This sequence belongs to the uroporphyrinogen decarboxylase family. Homodimer.

It localises to the cytoplasm. The enzyme catalyses uroporphyrinogen III + 4 H(+) = coproporphyrinogen III + 4 CO2. Its pathway is porphyrin-containing compound metabolism; protoporphyrin-IX biosynthesis; coproporphyrinogen-III from 5-aminolevulinate: step 4/4. Catalyzes the decarboxylation of four acetate groups of uroporphyrinogen-III to yield coproporphyrinogen-III. This chain is Uroporphyrinogen decarboxylase, found in Francisella philomiragia subsp. philomiragia (strain ATCC 25017 / CCUG 19701 / FSC 153 / O#319-036).